Here is a 627-residue protein sequence, read N- to C-terminus: MDKNTVIGLVLIGLVIFGFSWLNRPDPQEIEAQRKAAIEAARQDSIAKAEAELLAARTQGATPDSIKQAAGYNQYGLLAAATAGAEEQVELANGKIALKLSTKGGAIREVLLRDYKTHDGKPLYLFREGESDFNLPLRTVDNRLVDTRDLYFSPISRTDSSVVMRLAVDSASYLDLAYVLLPDDYRLRMTVSGQNLQSLFPANMTMQDLEWSQRIRRQEKSWKFENQYTSIYYKYSGDEVDRLSDSKQEDKKTLEEPLHWVSFKDKYFASVLVCDSYFENNKLAQKTAAAGSDYLKNCTMSATFPLDVRSGTKARFTFFFGPLKYNMLRAYDKGMKAEDNLDLDHLVYLGASIFRWINRYMIIPASTFLQQYFSNWGLIILLLTLGIKLLISPLAYKGYLSSAKMRLLRPQVQEINAKYPGKDQESMMKRQSATMNLYRAAGAGPMSGCLPMLLQFPFLIAMYMYFPTTIDIRQQSFLWAEDLSSYDAVFSWTADIPLLSQFYGNHVSLFCLLMSISNILYIRYTMNQSDTGQEGMAMLKWMPYITTVMFLFFFNQNASGLCYYYFLSSIITVIQYMSSRFIINEEKLMAKLEANKTKPRKKSKWMARLEEAQRQQEAMRRQQQKRK.

The next 6 helical transmembrane spans lie at Lys3 to Asn23, Trp376 to Tyr396, Leu450 to Ile470, Phe502 to Ile522, Glu534 to Phe554, and Ala558 to Ser578.

This sequence belongs to the OXA1/ALB3/YidC family. Type 1 subfamily. In terms of assembly, interacts with the Sec translocase complex via SecD. Specifically interacts with transmembrane segments of nascent integral membrane proteins during membrane integration.

It localises to the cell inner membrane. In terms of biological role, required for the insertion and/or proper folding and/or complex formation of integral membrane proteins into the membrane. Involved in integration of membrane proteins that insert both dependently and independently of the Sec translocase complex, as well as at least some lipoproteins. Aids folding of multispanning membrane proteins. The chain is Membrane protein insertase YidC from Porphyromonas gingivalis (strain ATCC BAA-308 / W83).